Consider the following 471-residue polypeptide: UDP-N-acetylmuramate--L-alanine ligase (471 aa).

ATP is bound at residue 114–120 (GTHGKTT).

This sequence belongs to the MurCDEF family.

Its subcellular location is the cytoplasm. The enzyme catalyses UDP-N-acetyl-alpha-D-muramate + L-alanine + ATP = UDP-N-acetyl-alpha-D-muramoyl-L-alanine + ADP + phosphate + H(+). Its pathway is cell wall biogenesis; peptidoglycan biosynthesis. Functionally, cell wall formation. This chain is UDP-N-acetylmuramate--L-alanine ligase, found in Rhizobium johnstonii (strain DSM 114642 / LMG 32736 / 3841) (Rhizobium leguminosarum bv. viciae).